The sequence spans 510 residues: ATP synthase subunit alpha (510 aa).

Position 169–176 (169–176 (GDRQTGKT)) interacts with ATP.

This sequence belongs to the ATPase alpha/beta chains family. As to quaternary structure, F-type ATPases have 2 components, CF(1) - the catalytic core - and CF(0) - the membrane proton channel. CF(1) has five subunits: alpha(3), beta(3), gamma(1), delta(1), epsilon(1). CF(0) has four main subunits: a(1), b(1), b'(1) and c(9-12).

Its subcellular location is the cell inner membrane. The catalysed reaction is ATP + H2O + 4 H(+)(in) = ADP + phosphate + 5 H(+)(out). In terms of biological role, produces ATP from ADP in the presence of a proton gradient across the membrane. The alpha chain is a regulatory subunit. The chain is ATP synthase subunit alpha from Rhodopseudomonas palustris (strain BisB18).